Here is a 77-residue protein sequence, read N- to C-terminus: UPF0154 protein LCK_00994 (77 aa).

A helical transmembrane segment spans residues 5 to 25 (FGILIFVLGLVIGLVIGFFVA). The disordered stretch occupies residues 50-77 (SMGQKPSQKKLNQMMAQMKQQSEQSQKK).

Belongs to the UPF0154 family.

Its subcellular location is the cell membrane. The polypeptide is UPF0154 protein LCK_00994 (Leuconostoc citreum (strain KM20)).